The following is a 436-amino-acid chain: Trigger factor (436 aa).

Residues 163–248 form the PPIase FKBP-type domain; the sequence is GDRVTVDFEG…VKKIEAANLP (86 aa).

Belongs to the FKBP-type PPIase family. Tig subfamily.

Its subcellular location is the cytoplasm. The enzyme catalyses [protein]-peptidylproline (omega=180) = [protein]-peptidylproline (omega=0). Its function is as follows. Involved in protein export. Acts as a chaperone by maintaining the newly synthesized protein in an open conformation. Functions as a peptidyl-prolyl cis-trans isomerase. This is Trigger factor from Delftia acidovorans (strain DSM 14801 / SPH-1).